Consider the following 180-residue polypeptide: MSNEIVAKRYAVALFQIAKEKHVLEMFEEELGLVQSVFMKNEELHSFLTKPNISKEQKKMFLSNVFSSVSESILNTLYILVDNKRIEILPAIANEYVTLANEERNVADATVYSTRLLSEEEKLNIAEAFAKRTGKDAIRVKNIVDEDLLGGIKVRIGNRIYDGSLQGKLARIQRELMKNR.

Belongs to the ATPase delta chain family. As to quaternary structure, F-type ATPases have 2 components, F(1) - the catalytic core - and F(0) - the membrane proton channel. F(1) has five subunits: alpha(3), beta(3), gamma(1), delta(1), epsilon(1). F(0) has three main subunits: a(1), b(2) and c(10-14). The alpha and beta chains form an alternating ring which encloses part of the gamma chain. F(1) is attached to F(0) by a central stalk formed by the gamma and epsilon chains, while a peripheral stalk is formed by the delta and b chains.

It localises to the cell membrane. Its function is as follows. F(1)F(0) ATP synthase produces ATP from ADP in the presence of a proton or sodium gradient. F-type ATPases consist of two structural domains, F(1) containing the extramembraneous catalytic core and F(0) containing the membrane proton channel, linked together by a central stalk and a peripheral stalk. During catalysis, ATP synthesis in the catalytic domain of F(1) is coupled via a rotary mechanism of the central stalk subunits to proton translocation. In terms of biological role, this protein is part of the stalk that links CF(0) to CF(1). It either transmits conformational changes from CF(0) to CF(1) or is implicated in proton conduction. The sequence is that of ATP synthase subunit delta from Bacillus cytotoxicus (strain DSM 22905 / CIP 110041 / 391-98 / NVH 391-98).